The chain runs to 445 residues: Rab GDP dissociation inhibitor beta (445 aa).

At Met1 the chain carries N-acetylmethionine. Lys112 carries the post-translational modification N6-acetyllysine. Ser130 is modified (phosphoserine). Lys269 carries the N6-acetyllysine modification. Phosphoserine is present on Ser382.

Belongs to the Rab GDI family. In terms of assembly, interacts with RHOH. Interacts with the GDP-bound inactive forms of RAB3A, RAB3B, RAB3C, RAB5A, RAB5B, RAB5C, RAB8A, RAB8B, RAB10, RAB12, RAB35, and RAB43; binds RAB3D to a lesser extent. Interacts with DZIP1; this interaction negatively regulates the interaction of GDI2 with GDP-bound RAB8A.

It localises to the cytoplasm. Its subcellular location is the membrane. It is found in the golgi apparatus. The protein localises to the trans-Golgi network. Its function is as follows. GDP-dissociation inhibitor preventing the GDP to GTP exchange of most Rab proteins. By keeping these small GTPases in their inactive GDP-bound form regulates intracellular membrane trafficking. Negatively regulates protein transport to the cilium and ciliogenesis through the inhibition of RAB8A. In Sus scrofa (Pig), this protein is Rab GDP dissociation inhibitor beta (GDI2).